Reading from the N-terminus, the 287-residue chain is 4-hydroxybenzoate octaprenyltransferase (287 aa).

5 consecutive transmembrane segments (helical) span residues 20-38 (IGTL…FAAG), 95-115 (IVFL…NPLV), 211-231 (IIAA…LIAE), 235-255 (IYGG…KLIF), and 266-286 (FLNN…DYLV).

Belongs to the UbiA prenyltransferase family. It depends on Mg(2+) as a cofactor.

Its subcellular location is the cell inner membrane. It catalyses the reaction all-trans-octaprenyl diphosphate + 4-hydroxybenzoate = 4-hydroxy-3-(all-trans-octaprenyl)benzoate + diphosphate. It participates in cofactor biosynthesis; ubiquinone biosynthesis. Catalyzes the prenylation of para-hydroxybenzoate (PHB) with an all-trans polyprenyl group. Mediates the second step in the final reaction sequence of ubiquinone-8 (UQ-8) biosynthesis, which is the condensation of the polyisoprenoid side chain with PHB, generating the first membrane-bound Q intermediate 3-octaprenyl-4-hydroxybenzoate. The sequence is that of 4-hydroxybenzoate octaprenyltransferase from Shewanella piezotolerans (strain WP3 / JCM 13877).